The chain runs to 175 residues: ATP synthase subunit b (175 aa).

Residues L20–W40 traverse the membrane as a helical segment.

This sequence belongs to the ATPase B chain family. As to quaternary structure, F-type ATPases have 2 components, F(1) - the catalytic core - and F(0) - the membrane proton channel. F(1) has five subunits: alpha(3), beta(3), gamma(1), delta(1), epsilon(1). F(0) has four main subunits: a(1), b(2) and c(10-14). The alpha and beta chains form an alternating ring which encloses part of the gamma chain. F(1) is attached to F(0) by a central stalk formed by the gamma and epsilon chains, while a peripheral stalk is formed by the delta and b chains.

The protein localises to the cell inner membrane. F(1)F(0) ATP synthase produces ATP from ADP in the presence of a proton or sodium gradient. F-type ATPases consist of two structural domains, F(1) containing the extramembraneous catalytic core and F(0) containing the membrane proton channel, linked together by a central stalk and a peripheral stalk. During catalysis, ATP synthesis in the catalytic domain of F(1) is coupled via a rotary mechanism of the central stalk subunits to proton translocation. Functionally, component of the F(0) channel, it forms part of the peripheral stalk, linking F(1) to F(0). This Pelodictyon phaeoclathratiforme (strain DSM 5477 / BU-1) protein is ATP synthase subunit b.